The chain runs to 156 residues: D-aminoacyl-tRNA deacylase (156 aa).

The Gly-cisPro motif, important for rejection of L-amino acids signature appears at 142-143; the sequence is GP.

Belongs to the DTD family. Homodimer.

It localises to the cytoplasm. The catalysed reaction is glycyl-tRNA(Ala) + H2O = tRNA(Ala) + glycine + H(+). It catalyses the reaction a D-aminoacyl-tRNA + H2O = a tRNA + a D-alpha-amino acid + H(+). Its function is as follows. An aminoacyl-tRNA editing enzyme that deacylates mischarged D-aminoacyl-tRNAs. Also deacylates mischarged glycyl-tRNA(Ala), protecting cells against glycine mischarging by AlaRS. Acts via tRNA-based rather than protein-based catalysis; rejects L-amino acids rather than detecting D-amino acids in the active site. By recycling D-aminoacyl-tRNA to D-amino acids and free tRNA molecules, this enzyme counteracts the toxicity associated with the formation of D-aminoacyl-tRNA entities in vivo and helps enforce protein L-homochirality. This Cupriavidus metallidurans (strain ATCC 43123 / DSM 2839 / NBRC 102507 / CH34) (Ralstonia metallidurans) protein is D-aminoacyl-tRNA deacylase.